A 74-amino-acid chain; its full sequence is MEVQVLEAGKIISPNEKVIVWRIGDYFLIKKIEGKKTLERIGEIRKKLEDRDMLLSEEEVVKTVKEVREEWKRL.

This is an uncharacterized protein from Archaeoglobus fulgidus (strain ATCC 49558 / DSM 4304 / JCM 9628 / NBRC 100126 / VC-16).